The primary structure comprises 1314 residues: Synergin gamma (1314 aa).

A coiled-coil region spans residues 115–155; the sequence is MQKQFAEEQQKRFEQQQKLLEEERKRRQFEEQKQKLRLLSS. The disordered stretch occupies residues 178–199; it reads GFSRDAKMHPTPASHPKKPGPS. Positions 295 to 388 constitute an EH domain; that stretch reads NESLVPDAYK…QFPAAPIPTL (94 aa). A DFXDF motif 1 motif is present at residues 457-461; the sequence is DFQDF. Residues 460-498 are disordered; that stretch reads DFQDASKSGSLDDSFSDFQELPASSKTSNSQHGNSAPSL. The segment covering 462-496 has biased composition (polar residues); that stretch reads QDASKSGSLDDSFSDFQELPASSKTSNSQHGNSAP. Ser-473 bears the Phosphoserine mark. At Lys-513 the chain carries N6-acetyllysine. Residues 518-786 form an interaction with AP1G1 region; it reads KGIAADKSSE…ADFHSSKFSS (269 aa). Ser-580 carries the phosphoserine modification. Positions 666–678 are interaction with AP1G1, AP1G2 and GGA1; the sequence is LADDFGEFSLFGE. A DFXDF motif 2 motif is present at residues 690–694; it reads DFADF. Residue Ser-720 is modified to Phosphoserine. At Lys-744 the chain carries N6-acetyllysine. Phosphoserine occurs at positions 752 and 772. The DFXDF motif 3 motif lies at 775–779; the sequence is DFADF. Residues Ser-812, Ser-852, Ser-855, Ser-909, Ser-919, and Ser-935 each carry the phosphoserine modification. Disordered regions lie at residues 972-1026 and 1073-1102; these read PQTS…DFGE and SLSL…NTLN. The segment covering 976–990 has biased composition (basic and acidic residues); the sequence is EQKEYENRDYKDFTK. Positions 1001 to 1019 are enriched in polar residues; that stretch reads EATCPSPASSGASQETPNE. Phosphoserine is present on residues Ser-1006, Ser-1073, Ser-1075, Ser-1087, and Ser-1098. Thr-1100 is subject to Phosphothreonine.

In terms of assembly, self-associates. Interacts with GGA1 (via GAE domain). Interacts with GGA2 and GGA3. Interacts with AP1G1 (via GAE domain), a subunit of adapter protein complex AP-1. Interacts with AP1G2 (via GAE domain) a subunit of adapter protein complex AP-1. Component of the aftiphilin/p200/gamma-synergin complex, at least composed of AFTPH/aftiphilin, HEATR5B/p200a and SYNRG/gamma-synergin, which plays a role in the AP1G1/AP-1-mediated trafficking of transferrin from early to recycling endosomes. Within the complex interacts with AFTPH/aftiphilin and HEATR5B/p200a; the interactions are direct. Interacts (via EH domain) with SCAMP1.

It is found in the cytoplasm. Its subcellular location is the golgi apparatus. It localises to the trans-Golgi network membrane. The protein resides in the perinuclear region. The protein localises to the cytoplasmic vesicle. It is found in the clathrin-coated vesicle. Its function is as follows. Plays a role in endocytosis and/or membrane trafficking at the trans-Golgi network (TGN). May act by linking the adapter protein complex AP-1 to other proteins. Component of clathrin-coated vesicles. Component of the aftiphilin/p200/gamma-synergin complex, which plays roles in AP1G1/AP-1-mediated protein trafficking including the trafficking of transferrin from early to recycling endosomes, and the membrane trafficking of furin and the lysosomal enzyme cathepsin D between the trans-Golgi network (TGN) and endosomes. This chain is Synergin gamma, found in Homo sapiens (Human).